Consider the following 245-residue polypeptide: tRNA pseudouridine synthase A (245 aa).

Asp-52 serves as the catalytic Nucleophile. Tyr-110 contacts substrate.

The protein belongs to the tRNA pseudouridine synthase TruA family. As to quaternary structure, homodimer.

It catalyses the reaction uridine(38/39/40) in tRNA = pseudouridine(38/39/40) in tRNA. Formation of pseudouridine at positions 38, 39 and 40 in the anticodon stem and loop of transfer RNAs. The sequence is that of tRNA pseudouridine synthase A from Borrelia turicatae (strain 91E135).